The chain runs to 160 residues: Large ribosomal subunit protein uL16 (160 aa).

The segment covering 138 to 148 (KNLEVSSQENT) has biased composition (polar residues). Positions 138–160 (KNLEVSSQENTKNNKESQEEVKQ) are disordered. Over residues 149–160 (KNNKESQEEVKQ) the composition is skewed to basic and acidic residues.

The protein belongs to the universal ribosomal protein uL16 family. As to quaternary structure, part of the 50S ribosomal subunit.

Its function is as follows. Binds 23S rRNA and is also seen to make contacts with the A and possibly P site tRNAs. The chain is Large ribosomal subunit protein uL16 from Prochlorococcus marinus (strain MIT 9312).